We begin with the raw amino-acid sequence, 386 residues long: Phosphoglycerate kinase (386 aa).

Substrate is bound by residues 21–23 (DLN), Arg36, 59–62 (HLGR), Arg112, and Arg145. ATP-binding positions include Lys196, Glu313, and 339–342 (GGDT).

It belongs to the phosphoglycerate kinase family. As to quaternary structure, monomer.

Its subcellular location is the cytoplasm. It carries out the reaction (2R)-3-phosphoglycerate + ATP = (2R)-3-phospho-glyceroyl phosphate + ADP. It participates in carbohydrate degradation; glycolysis; pyruvate from D-glyceraldehyde 3-phosphate: step 2/5. This Haemophilus influenzae (strain 86-028NP) protein is Phosphoglycerate kinase.